The primary structure comprises 1093 residues: MGAFSWWRQPSWMADNKRGRMTPSLPWLLSALTLLHLMMHVNGLKRGVQQDLKCTTNNMRVWDCSWPAPLGVSPGTVKDICIKDRPHSCHRLETTNVKIPALSPGDHEVTINYQNGFQSKFTLNEKDVSLVPDTPEILSLSADFSTSTLQLKWNDKGSALPYPSNATWEVKVLQNPRTEPVALVSLNTVLSGKDKGHHWNWTSELPLQCATHSVSIRWHIDYPRFSGYKEWSEWSPLKNISWTRNTETNVFPQDKVVLAGSNMTICCISTTKVLSGQIGNTFRPLIHLYGETVAINILNIPVSENSGSNVIFSTVDDVYGTVVFAGYPPDVPQKLSCETHDLKEIICSWNPGRITGLVGPRNTEYTLFESISGKSAVFHRFEELANETYWLTLKMAPDQEIHNFTLTARNPLGQTESAIVINATERVALHVPISLKVKDVNSTVVTLSWYLPGNFTKINLVCQIEICKANSKKEVRNVTMRGAEDSTYHVAVDKLNPYTIYTFRVRCSSETFWKWSKWSNEKRYLTTEATPSKGPDTWREWSSDGKNLIIYWKPLPINEANGKILSYNVSCSSSEETQSLSEILDPQHKAEIKVNKNDYIISVVARNSAGSSPPSKIASMEIPNDDITVEQAVGIGNRIFLSWQHNPNMTCDYVIKWCNSSWSEPCLLDWIKVPSNSTGTVIESDQFQPGVRYNFYLYGCTNQGYQLLRSTIGYIEELAPIVAPNFTVEDTSADSILVKWDDIPVEELRGFLRGYLFYFQKGERDTPKTRSLETSHSDIKLKNITDISQKTLRIADLQGKTSYHLVLRAYTHGGLGPEKSMFVVTKENSVGLIIAILIPVAVAVIVGVVTSILCYRKREWIKETFYPDIPNPENCKALQFQKSVCEGSNALKTLEMNPCTPNHVEVLESRSIPPKIEDTEITSPVSERPGESSETDPENQAAVSYCPPIIEEEITNPAADEAGGASQVVYIDVQSMYQPQAKAEDEQDTDPVMVAGYKPQMRLPINPTAEDTTAEDEADKTAGYRPQANVNTWNLVSPDSPRSTDSNSEVVSFGSPCSINSRQFLIPPKDEDSPKSNGGGWSFTNFFQNKPND.

The N-terminal stretch at 1-43 (MGAFSWWRQPSWMADNKRGRMTPSLPWLLSALTLLHLMMHVNG) is a signal peptide. Over 44-829 (LKRGVQQDLK…SMFVVTKENS (786 aa)) the chain is Extracellular. The Fibronectin type-III 1 domain occupies 45-127 (KRGVQQDLKC…QSKFTLNEKD (83 aa)). Disulfide bonds link Cys-54–Cys-64 and Cys-81–Cys-89. N-linked (GlcNAc...) asparagine glycosylation is found at Asn-165, Asn-200, Asn-239, and Asn-262. 2 disulfides stabilise this stretch: Cys-209-Cys-266 and Cys-337-Cys-347. 5 consecutive Fibronectin type-III domains span residues 331–428 (VPQK…ERVA), 431–530 (VPIS…TEAT), 534–625 (GPDT…IPND), 623–715 (PNDD…IGYI), and 720–829 (PIVA…KENS). Asn-386, Asn-403, Asn-422, Asn-441, Asn-454, and Asn-477 each carry an N-linked (GlcNAc...) asparagine glycan. A disulfide bond links Cys-462 and Cys-507. A WSXWS motif motif is present at residues 515 to 519 (WSKWS). N-linked (GlcNAc...) asparagine glycosylation is found at Asn-568, Asn-648, Asn-659, Asn-676, Asn-725, and Asn-783. Residues 830–850 (VGLIIAILIPVAVAVIVGVVT) form a helical membrane-spanning segment. Over 851–1093 (SILCYRKREW…TNFFQNKPND (243 aa)) the chain is Cytoplasmic. The Box 1 motif signature appears at 865-873 (FYPDIPNPE). Disordered regions lie at residues 908–941 (ESRS…ENQA) and 1003–1093 (LPIN…KPND). Ser-923 and Ser-1040 each carry phosphoserine. Composition is skewed to polar residues over residues 1028 to 1063 (ANVN…NSRQ) and 1082 to 1093 (SFTNFFQNKPND).

Belongs to the type I cytokine receptor family. Type 2 subfamily. Heterodimer composed of LIFR and IL6ST. The heterodimer formed by LIFR and IL6ST interacts with the complex formed by CNTF and CNTFR.

It localises to the cell membrane. Signal-transducing molecule. May have a common pathway with IL6ST. The soluble form inhibits the biological activity of LIF by blocking its binding to receptors on target cells. This chain is Leukemia inhibitory factor receptor (Lifr), found in Rattus norvegicus (Rat).